The primary structure comprises 138 residues: Thyrotropin subunit beta (138 aa).

Positions 1–20 (MSAAVLLSVLFALACGQAAS) are cleaved as a signal peptide. 6 disulfide bridges follow: cysteine 22-cysteine 72, cysteine 36-cysteine 87, cysteine 39-cysteine 125, cysteine 47-cysteine 103, cysteine 51-cysteine 105, and cysteine 108-cysteine 115. N-linked (GlcNAc...) asparagine glycosylation occurs at asparagine 43. A propeptide spanning residues 133 to 138 (LGGFSV) is cleaved from the precursor.

This sequence belongs to the glycoprotein hormones subunit beta family. As to quaternary structure, heterodimer of a common alpha chain and a unique beta chain which confers biological specificity to thyrotropin, lutropin, follitropin and gonadotropin.

Its subcellular location is the secreted. In terms of biological role, indispensable for the control of thyroid structure and metabolism. In Mus musculus (Mouse), this protein is Thyrotropin subunit beta (Tshb).